A 493-amino-acid polypeptide reads, in one-letter code: Glutamyl-tRNA(Gln) amidotransferase subunit A (493 aa).

Residues Lys-79 and Ser-159 each act as charge relay system in the active site. The active-site Acyl-ester intermediate is the Ser-183.

This sequence belongs to the amidase family. GatA subfamily. In terms of assembly, heterotrimer of A, B and C subunits.

It catalyses the reaction L-glutamyl-tRNA(Gln) + L-glutamine + ATP + H2O = L-glutaminyl-tRNA(Gln) + L-glutamate + ADP + phosphate + H(+). Allows the formation of correctly charged Gln-tRNA(Gln) through the transamidation of misacylated Glu-tRNA(Gln) in organisms which lack glutaminyl-tRNA synthetase. The reaction takes place in the presence of glutamine and ATP through an activated gamma-phospho-Glu-tRNA(Gln). This chain is Glutamyl-tRNA(Gln) amidotransferase subunit A, found in Agrobacterium fabrum (strain C58 / ATCC 33970) (Agrobacterium tumefaciens (strain C58)).